The following is a 152-amino-acid chain: Protein-export protein SecB (152 aa).

Belongs to the SecB family. In terms of assembly, homotetramer, a dimer of dimers. One homotetramer interacts with 1 SecA dimer.

It localises to the cytoplasm. Functionally, one of the proteins required for the normal export of preproteins out of the cell cytoplasm. It is a molecular chaperone that binds to a subset of precursor proteins, maintaining them in a translocation-competent state. It also specifically binds to its receptor SecA. The sequence is that of Protein-export protein SecB from Rickettsia peacockii (strain Rustic).